A 703-amino-acid polypeptide reads, in one-letter code: METETEHDRTVSVDDNDSLVPEPSSTKESFFEDLSLTGQVMNPQLSSAGEVLTKVELDFAFVSEKLVNLSLLTMQLGTRENDFESFVSKKEEDEEEPSSNVDDDDDSAEKALEFDLLSSILNSEVKELESLLGFLQNEIQSARVMISPFQHDGEAFLDLEGKLNDTEQSLGQLMEQVVEMKKQSSNFQRLSSGLDEQGSWSGGQTSVSQNDGEFGDLSAKINMQTADQQRNVLRMLEKSLAKEMELEKKLSESRNTERELEMKLYSSEQDVVYMEEVTEDAFSRWLEADNAAEVFKGTSKEMSGKLQILQFNLSGSFKREDNLKSKLVDSKERLEAKECALHKLDSSNARLADFLVAQTEGLKESLQEAEEKLILLNTENSTLSEKVSSLEEQLNEYGIQTEDADATSGALITDLERINEELKDKLAKTEARAEETESKCKILEESKKELQDELGNFRDKGFTIHKLASLEKHLRDSDLQLEHAVAAVEASKEKQNLLYSTVSDMEDVIEDLKSKVLKAENRADITEEKLIMVSESNAEVNEELKFFKGRLKEGEKYLQQAEERKLRTAKDIGVHNKIMKKLVMQLAAERERLHKQITNLSRENCVLMVKLKKVGKTGYMESGNGSEVSPKSDQNASSCHQGSRLQATFISLTNPEEEETGSKSDIGSVRRLDVGALRFKHILVAILVILISSIAYVISQQNM.

The segment covering 1–12 (METETEHDRTVS) has biased composition (basic and acidic residues). Disordered regions lie at residues 1–27 (METE…SSTK) and 86–107 (FVSK…DDDS). A compositionally biased stretch (acidic residues) spans 92–107 (EDEEEPSSNVDDDDDS). A coiled-coil region spans residues 118-183 (SSILNSEVKE…MEQVVEMKKQ (66 aa)). The tract at residues 189–208 (RLSSGLDEQGSWSGGQTSVS) is disordered. Residues 198-208 (GSWSGGQTSVS) are compositionally biased toward polar residues. Coiled-coil stretches lie at residues 236–265 (LEKS…MKLY), 318–461 (KRED…RDKG), and 500–604 (STVS…SREN). The chain crosses the membrane as a helical span at residues 679–699 (FKHILVAILVILISSIAYVIS).

As to quaternary structure, homodimer. Component of Ran complexes at least composed of WIT1 or WIT2, RANGAP1 or RANGAP2, and WIP1 or WIP2 or WIP3. Interacts with WIP2, WPP1/MAF1, WPP2/MAF2, RANGAP1 and RANGAP2. Component of a ternary complex composed of WPP1, HSP70-1 and WIT1. Interacts with KAKU1. Interacts with WIP1. In terms of tissue distribution, ubiquitous.

It is found in the nucleus envelope. The protein localises to the nucleus membrane. In terms of biological role, together with WIT2, required for the nuclear envelope docking of RANGAP proteins in root tips. This Arabidopsis thaliana (Mouse-ear cress) protein is WPP domain-interacting tail-anchored protein 1 (WIT1).